Here is a 730-residue protein sequence, read N- to C-terminus: Cyclin-dependent kinase 12 (730 aa).

Disordered regions lie at residues 1 to 230 (MEIS…APFS) and 246 to 283 (FSLSSIPPPPPQTDGGASSSKRQDPLPMPPDSKRIATR). Residues 9-21 (THERDRKGSYGHR) are compositionally biased toward basic and acidic residues. The segment covering 57–67 (SISPQYKQRNW) has biased composition (polar residues). Residues 75–94 (GRDRGRNDFSYRKKGKDYNK) are compositionally biased toward basic and acidic residues. Composition is skewed to basic residues over residues 95–122 (RRDKRSRSRSRHRSPKRSGSSKKSKRRN) and 151–163 (KSKKKSRKRRKHS). The segment covering 194–203 (FNINPFQPMF) has biased composition (low complexity). A compositionally biased stretch (pro residues) spans 204–230 (SQPPPPPLPPNSQFMTPPPRPPPAPFS). One can recognise a Protein kinase domain in the interval 313 to 605 (MLDQIGEGTY…AKEALNHPWI (293 aa)). Residues 317-325 (IGEGTYGQV), Lys340, and 398-403 (EYVDHD) each bind ATP. Asp444 functions as the Proton acceptor in the catalytic mechanism. The disordered stretch occupies residues 623–730 (DCHEMWSKKQ…QSQYQSVFFK (108 aa)). His625 is a binding site for ATP. Basic residues predominate over residues 676–688 (NHHHHHHHSHHHA). Residues 714–730 (NNHQPVPQSQYQSVFFK) show a composition bias toward polar residues.

Belongs to the protein kinase superfamily. CMGC Ser/Thr protein kinase family. CDC2/CDKX subfamily.

Its subcellular location is the nucleus. It carries out the reaction [DNA-directed RNA polymerase] + ATP = phospho-[DNA-directed RNA polymerase] + ADP + H(+). It catalyses the reaction L-seryl-[protein] + ATP = O-phospho-L-seryl-[protein] + ADP + H(+). The catalysed reaction is L-threonyl-[protein] + ATP = O-phospho-L-threonyl-[protein] + ADP + H(+). Its function is as follows. Cyclin-dependent kinase which displays CTD kinase activity: hyperphosphorylates 'Ser-2' in the C-terminal heptapeptide repeat domain (CTD) of the largest RNA polymerase II subunit, thereby acting as a key regulator of transcription elongation. Required for normal reproduction. In Caenorhabditis elegans, this protein is Cyclin-dependent kinase 12.